The following is a 629-amino-acid chain: uncharacterized protein (629 aa).

The span at 1–11 shows a compositional bias: polar residues; the sequence is MSDDQQNGKQN. 4 disordered regions span residues 1-24, 62-87, 197-464, and 493-560; these read MSDDQQNGKQNTTTTTSTPTEQDD, SNNNNNNNNDSVNNNSNNNINNSNYN, SEES…SSLI, and PTPT…STPD. Over residues 247 to 264 the composition is skewed to low complexity; that stretch reads PSSSSSSSSLINSPTTSK. A compositionally biased stretch (polar residues) spans 274 to 288; that stretch reads PTINPKSLFGLSSTI. Residues 294–430 show a composition bias toward basic and acidic residues; that stretch reads VKTEKEKEKE…DETLNKETPH (137 aa). Composition is skewed to low complexity over residues 434 to 464 and 493 to 554; these read PHITTKKSPNLTPPISSTASPPSVTTYSSLI and PTPT…NNNN.

This is an uncharacterized protein from Dictyostelium discoideum (Social amoeba).